A 55-amino-acid chain; its full sequence is Conotoxin Cal22c (55 aa).

Positions 1–5 (GRPSA) are excised as a propeptide.

In terms of processing, contains 4 disulfide bonds. Expressed by the venom duct.

The protein localises to the secreted. Its function is as follows. Probable neurotoxin with unknown target. Possibly targets ion channels. The polypeptide is Conotoxin Cal22c (Californiconus californicus (California cone)).